A 126-amino-acid polypeptide reads, in one-letter code: S-adenosylmethionine decarboxylase proenzyme (126 aa).

Residue Ser63 is the Schiff-base intermediate with substrate; via pyruvic acid of the active site. Ser63 carries the pyruvic acid (Ser); by autocatalysis modification. The Proton acceptor; for processing activity role is filled by His68. The active-site Proton donor; for catalytic activity is the Cys83.

It belongs to the prokaryotic AdoMetDC family. Type 1 subfamily. In terms of assembly, heterotetramer of two alpha and two beta chains arranged as a dimer of alpha/beta heterodimers. The cofactor is pyruvate. In terms of processing, is synthesized initially as an inactive proenzyme. Formation of the active enzyme involves a self-maturation process in which the active site pyruvoyl group is generated from an internal serine residue via an autocatalytic post-translational modification. Two non-identical subunits are generated from the proenzyme in this reaction, and the pyruvate is formed at the N-terminus of the alpha chain, which is derived from the carboxyl end of the proenzyme. The post-translation cleavage follows an unusual pathway, termed non-hydrolytic serinolysis, in which the side chain hydroxyl group of the serine supplies its oxygen atom to form the C-terminus of the beta chain, while the remainder of the serine residue undergoes an oxidative deamination to produce ammonia and the pyruvoyl group blocking the N-terminus of the alpha chain.

It carries out the reaction S-adenosyl-L-methionine + H(+) = S-adenosyl 3-(methylsulfanyl)propylamine + CO2. It participates in amine and polyamine biosynthesis; S-adenosylmethioninamine biosynthesis; S-adenosylmethioninamine from S-adenosyl-L-methionine: step 1/1. Catalyzes the decarboxylation of S-adenosylmethionine to S-adenosylmethioninamine (dcAdoMet), the propylamine donor required for the synthesis of the polyamines spermine and spermidine from the diamine putrescine. This is S-adenosylmethionine decarboxylase proenzyme from Syntrophomonas wolfei subsp. wolfei (strain DSM 2245B / Goettingen).